Consider the following 103-residue polypeptide: Large ribosomal subunit protein uL23 (103 aa).

The protein belongs to the universal ribosomal protein uL23 family. In terms of assembly, part of the 50S ribosomal subunit. Contacts protein L29, and trigger factor when it is bound to the ribosome.

Its function is as follows. One of the early assembly proteins it binds 23S rRNA. One of the proteins that surrounds the polypeptide exit tunnel on the outside of the ribosome. Forms the main docking site for trigger factor binding to the ribosome. This Chlorobium phaeovibrioides (strain DSM 265 / 1930) (Prosthecochloris vibrioformis (strain DSM 265)) protein is Large ribosomal subunit protein uL23.